Here is a 221-residue protein sequence, read N- to C-terminus: Phosphatidylethanolamine-binding protein homolog F40A3.3 (221 aa).

Belongs to the phosphatidylethanolamine-binding protein family.

This chain is Phosphatidylethanolamine-binding protein homolog F40A3.3, found in Caenorhabditis elegans.